A 103-amino-acid chain; its full sequence is MIVTTTAEIQGKEIIEYIDIVNGEAIMGANIVRDVFASVRDVVGGRAGAYESKLKEARDIAMDEMKELAKQKGVNAIVGIDVDYAIIRAGMLMVAVSGTAVRI.

It belongs to the UPF0145 family.

The polypeptide is UPF0145 protein pXO2-45/BXB0052/GBAA_pXO2_0052 (Bacillus anthracis).